A 1324-amino-acid polypeptide reads, in one-letter code: Probable phosphoribosylformylglycinamidine synthase (1324 aa).

Residues 314–325 (GATTGTGGRIRD), 394–396 (SGF), and Ala681 contribute to the ATP site. Mg(2+) is bound by residues Asp682, Glu721, Asn725, and Asp894. Residue Ser896 coordinates ATP. Positions 1053-1295 (RVAIIREEGS…LTWQWAESSE (243 aa)) constitute a Glutamine amidotransferase type-1 domain. Cys1146 serves as the catalytic Nucleophile. Active-site residues include His1280 and Asp1282.

In the N-terminal section; belongs to the FGAMS family.

The protein resides in the cytoplasm. The enzyme catalyses N(2)-formyl-N(1)-(5-phospho-beta-D-ribosyl)glycinamide + L-glutamine + ATP + H2O = 2-formamido-N(1)-(5-O-phospho-beta-D-ribosyl)acetamidine + L-glutamate + ADP + phosphate + H(+). It functions in the pathway purine metabolism; IMP biosynthesis via de novo pathway; 5-amino-1-(5-phospho-D-ribosyl)imidazole from N(2)-formyl-N(1)-(5-phospho-D-ribosyl)glycinamide: step 1/2. In terms of biological role, phosphoribosylformylglycinamidine synthase involved in the purines biosynthetic pathway. Catalyzes the ATP-dependent conversion of formylglycinamide ribonucleotide (FGAR) and glutamine to yield formylglycinamidine ribonucleotide (FGAM) and glutamate. This Caenorhabditis elegans protein is Probable phosphoribosylformylglycinamidine synthase.